A 229-amino-acid polypeptide reads, in one-letter code: Large ribosomal subunit protein bL19cy (229 aa).

Residues 1-70 (MATSSHLLPQ…DSKKRKEFIA (70 aa)) constitute a chloroplast transit peptide.

This sequence belongs to the bacterial ribosomal protein bL19 family. As to quaternary structure, part of the 50S ribosomal subunit.

It is found in the plastid. The protein localises to the chloroplast. Located at the 30S-50S ribosomal subunit interface and binds directly to 23S ribosomal RNA. The chain is Large ribosomal subunit protein bL19cy from Arabidopsis thaliana (Mouse-ear cress).